The primary structure comprises 293 residues: Ribosomal RNA small subunit methyltransferase A (293 aa).

Positions 29, 31, 56, 77, 102, and 127 each coordinate S-adenosyl-L-methionine.

Belongs to the class I-like SAM-binding methyltransferase superfamily. rRNA adenine N(6)-methyltransferase family. RsmA subfamily.

It localises to the cytoplasm. The catalysed reaction is adenosine(1518)/adenosine(1519) in 16S rRNA + 4 S-adenosyl-L-methionine = N(6)-dimethyladenosine(1518)/N(6)-dimethyladenosine(1519) in 16S rRNA + 4 S-adenosyl-L-homocysteine + 4 H(+). Functionally, specifically dimethylates two adjacent adenosines (A1518 and A1519) in the loop of a conserved hairpin near the 3'-end of 16S rRNA in the 30S particle. May play a critical role in biogenesis of 30S subunits. The chain is Ribosomal RNA small subunit methyltransferase A from Geobacillus thermodenitrificans (strain NG80-2).